Reading from the N-terminus, the 252-residue chain is tRNA (guanine-N(1)-)-methyltransferase (252 aa).

S-adenosyl-L-methionine-binding positions include glycine 113 and 133 to 138; that span reads IGDYVL.

It belongs to the RNA methyltransferase TrmD family. As to quaternary structure, homodimer.

The protein resides in the cytoplasm. The enzyme catalyses guanosine(37) in tRNA + S-adenosyl-L-methionine = N(1)-methylguanosine(37) in tRNA + S-adenosyl-L-homocysteine + H(+). Its function is as follows. Specifically methylates guanosine-37 in various tRNAs. This chain is tRNA (guanine-N(1)-)-methyltransferase, found in Baumannia cicadellinicola subsp. Homalodisca coagulata.